The primary structure comprises 473 residues: SHC-transforming protein 1 (473 aa).

The disordered stretch occupies residues 1 to 26 (MNKLSGGGGRRTRVEGGQLGGEEWTR). Ser29 carries the post-translational modification Phosphoserine. Lys44 carries the post-translational modification N6-acetyllysine. Residues 46–229 (MGPGVSYLVR…AGFDGSAWDE (184 aa)) form the PID domain. Residues 216–314 (HDRMAGFDGS…PSSGRELFDD (99 aa)) form a disordered region. The segment at 230 to 377 (EEEEPPDHQY…AMAEQLRGEP (148 aa)) is CH1. Phosphotyrosine is present on residues Tyr239, Tyr240, and Tyr317. Residues 328–348 (QAGAGAGPPNPTINGSAPRDL) are disordered. Position 343 is a phosphoserine (Ser343). The SH2 domain maps to 378 to 469 (WFHGKLSRRE…GSELCLQQPV (92 aa)).

As to quaternary structure, interacts with CPNE3; this interaction may mediate the binding of CPNE3 with ERBB2. Interacts with the Trk receptors NTRK1, NTRK2 and NTRK3; in a phosphotyrosine-dependent manner. Interacts with the NPXY motif of tyrosine-phosphorylated IGF1R and INSR in vitro via the PID domain. Once activated, binds to GRB2. Interacts with tyrosine-phosphorylated CD3T and DDR2. Interacts with the N-terminal region of APS. Interacts with phosphorylated LRP1 and IRS4. Interacts with INPP5D/SHIP1 and INPPL1/SHIP2. Interacts with ALK, GAB2, GRB7 and KIT. Interacts with PTPN6/SHP (tyrosine phosphorylated). Identified in a complex containing FGFR4, NCAM1, CDH2, PLCG1, FRS2, SRC, SHC1, GAP43 and CTTN. Interacts with FLT4 (tyrosine-phosphorylated). Interacts with EPHB1 and GRB2; activates the MAPK/ERK cascade to regulate cell migration. Interacts with PDGFRB (tyrosine-phosphorylated). Interacts with ERBB4. Interacts with TEK/TIE2 (tyrosine-phosphorylated). Interacts with PTK2/FAK1. Interacts with CEACAM1; this interaction is CEACAM1-phosphorylation-dependent and mediates interaction with EGFR or INSR resulting in decrease coupling of SHC1 to the MAPK3/ERK1-MAPK1/ERK2 pathway. Interacts (via PID domain) with PEAK1 (when phosphorylated). Found in a complex with PPP1CA, PPP1CC, SHC1 and PEAK1. Post-translationally, phosphorylated by activated epidermal growth factor receptor. Phosphorylated in response to KIT signaling. Tyrosine phosphorylated in response to FLT3 and FLT4 signaling and by ligand-activated ALK. Tyrosine phosphorylated by ligand-activated PDGFRB. Tyrosine phosphorylated by TEK/TIE2. May be tyrosine phosphorylated by activated PTK2/FAK1. Tyrosine phosphorylated by activated PTK2B/PYK2. Dephosphorylation by PTPN2 may regulate interaction with GRB2.

It is found in the cytoplasm. The protein resides in the cell junction. Its subcellular location is the focal adhesion. Its function is as follows. Signaling adapter that couples activated growth factor receptors to signaling pathways. Participates in a signaling cascade initiated by activated KIT and KITLG/SCF. Participates in signaling downstream of the angiopoietin receptor TEK/TIE2, and plays a role in the regulation of endothelial cell migration and sprouting angiogenesis. This is SHC-transforming protein 1 (SHC1) from Bos taurus (Bovine).